The following is a 211-amino-acid chain: Troponin I, cardiac muscle (211 aa).

The segment at 1–25 (MADESSDAAGEPQPAPAPVRRRSSA) is disordered. A2 carries the N-acetylalanine modification. Phosphoserine is present on residues S5 and S6. A phosphoserine; by PKA and PKD/PRKD1 mark is found at S23 and S24. Y27 is subject to Phosphotyrosine. T32 bears the Phosphothreonine; by STK4/MST1 mark. The tract at residues 33 to 80 (EPHAKKKSKISASRKLQLKTLMLQIAKQEMEREAEERRGEKGRVLSTR) is involved in binding TNC. Phosphoserine; by PKC/PRKCE is present on residues S43 and S45. Residue T52 is modified to Phosphothreonine; by STK4/MST1. Position 78 is a phosphoserine (S78). A Phosphothreonine modification is found at T79. 2 positions are modified to phosphothreonine; by STK4/MST1: T130 and T144. The interval 130–151 (TQKIYDLRGKFKRPTLRRVRIS) is involved in binding TNC and actin. Residue S151 is modified to Phosphoserine; by PAK3. Phosphoserine is present on residues S167 and S200.

This sequence belongs to the troponin I family. As to quaternary structure, interacts with TRIM63. Binds to actin and tropomyosin. Interacts with STK4/MST1. In terms of processing, phosphorylated at Ser-23 and Ser-24 by PRKD1; phosphorylation reduces myofilament calcium sensitivity. Phosphorylated preferentially at Thr-32. Phosphorylation by STK4/MST1 alters its binding affinity to TNNC1 (cardiac Tn-C) and TNNT2 (cardiac Tn-T). Phosphorylated at Ser-43 and Ser-45 by PRKCE; phosphorylation increases myocardium contractile dysfunction.

In terms of biological role, troponin I is the inhibitory subunit of troponin, the thin filament regulatory complex which confers calcium-sensitivity to striated muscle actomyosin ATPase activity. The protein is Troponin I, cardiac muscle (Tnni3) of Rattus norvegicus (Rat).